We begin with the raw amino-acid sequence, 136 residues long: MLSPKRTRFRKQHRGRMKGKSYRGNCICFGRYALQALEPTWITARQIEAGRRAMTRYARRGGKIWVRIFPDKPVTIRPTETRMGSGKGSPEYWVAVVKPGRILYEMGGVSETVARAAISIAASKMPIRSQFLRLEI.

The protein belongs to the universal ribosomal protein uL16 family. Part of the 50S ribosomal subunit.

The protein localises to the plastid. It is found in the chloroplast. The polypeptide is Large ribosomal subunit protein uL16c (Oryza sativa (Rice)).